A 112-amino-acid polypeptide reads, in one-letter code: Protein F-112 (112 aa).

Essential for virus function. This is Protein F-112 from Saccharolobus solfataricus (Sulfolobus solfataricus).